The primary structure comprises 115 residues: Phosphoribosyl-AMP cyclohydrolase (115 aa).

D80 is a Mg(2+) binding site. Position 81 (C81) interacts with Zn(2+). Mg(2+) contacts are provided by D82 and D84. Positions 97 and 104 each coordinate Zn(2+).

It belongs to the PRA-CH family. As to quaternary structure, homodimer. It depends on Mg(2+) as a cofactor. The cofactor is Zn(2+).

It localises to the cytoplasm. The enzyme catalyses 1-(5-phospho-beta-D-ribosyl)-5'-AMP + H2O = 1-(5-phospho-beta-D-ribosyl)-5-[(5-phospho-beta-D-ribosylamino)methylideneamino]imidazole-4-carboxamide. The protein operates within amino-acid biosynthesis; L-histidine biosynthesis; L-histidine from 5-phospho-alpha-D-ribose 1-diphosphate: step 3/9. Its function is as follows. Catalyzes the hydrolysis of the adenine ring of phosphoribosyl-AMP. This Mycolicibacterium gilvum (strain PYR-GCK) (Mycobacterium gilvum (strain PYR-GCK)) protein is Phosphoribosyl-AMP cyclohydrolase.